Here is a 310-residue protein sequence, read N- to C-terminus: Porphobilinogen deaminase (310 aa).

Residue Cys241 is modified to S-(dipyrrolylmethanemethyl)cysteine.

This sequence belongs to the HMBS family. Monomer. It depends on dipyrromethane as a cofactor.

It catalyses the reaction 4 porphobilinogen + H2O = hydroxymethylbilane + 4 NH4(+). It participates in porphyrin-containing compound metabolism; protoporphyrin-IX biosynthesis; coproporphyrinogen-III from 5-aminolevulinate: step 2/4. Functionally, tetrapolymerization of the monopyrrole PBG into the hydroxymethylbilane pre-uroporphyrinogen in several discrete steps. In Lysinibacillus sphaericus (strain C3-41), this protein is Porphobilinogen deaminase.